A 174-amino-acid polypeptide reads, in one-letter code: Shikimate kinase 2 (174 aa).

Residue 12–17 (GAGKTT) coordinates ATP. Thr-16 and Asp-32 together coordinate Mg(2+). Residues Asp-34, Arg-58, and Gly-79 each coordinate substrate. The LID domain stretch occupies residues 112–126 (EEYPQDTQRPTLTGR). Arg-120 serves as a coordination point for ATP. Substrate is bound at residue Arg-139.

Belongs to the shikimate kinase family. AroL subfamily. Monomer. Mg(2+) is required as a cofactor.

It is found in the cytoplasm. The catalysed reaction is shikimate + ATP = 3-phosphoshikimate + ADP + H(+). It functions in the pathway metabolic intermediate biosynthesis; chorismate biosynthesis; chorismate from D-erythrose 4-phosphate and phosphoenolpyruvate: step 5/7. Catalyzes the specific phosphorylation of the 3-hydroxyl group of shikimic acid using ATP as a cosubstrate. This chain is Shikimate kinase 2, found in Serratia proteamaculans (strain 568).